Here is a 566-residue protein sequence, read N- to C-terminus: MSLSLHLSGWPENSESRQRMLESSSSTNFVQHFVSREISNKERLLSLFRRLRNGLVLVLTPLFFGQMLNWEGPEWKCAYCVCIIAVYWMSEVMPLAVTAMLPVVLFPLVGVLDANTTAKEYMNDTNFLFIGGLIMAAAVEKCDLHERVALSVLRCVGSEPKWIMLGFMTVTALLSSFISNTATTAMMVPIGQSVVQQLISSFQHHPTNGERGRLGCKKMATGLVLSICFAANIGGTGTATGTPSNLVMLGQLSALFPKVDGSLNYVTWIFFAYPLMLLCLFVAWMTLVSFFLRDAPEKDEAVTEMLKTRYNELPRMTYAEKSVFVCFCILLSLWVFRNPGVVPGFGVFFKKGAYTDATSAMIVAFLLFVLPSERPDLATYIKKEDLKKRGCLMDWKTMQETFPWSVVLLLGGGFALAAGVKESGLSLLIGNSLSSIEHLPLWILQLLTMLIAMVITNICSNTVTASIFVPIVATLAQRAGHHPFTLMLPTTLASSFAFIFPVGTPPNAIVFGSGMVKVSDMAFVGGIISLELLVLTVLYMNSIAYLTLPLLEFPTWAIIANSTMQQ.

The next 12 membrane-spanning stretches (helical) occupy residues 55-75, 92-112, 123-139, 162-182, 219-239, 268-288, 329-349, 352-372, 400-420, 439-459, 496-516, and 521-541; these read LVLV…GPEW, VMPL…VGVL, NDTN…AAAV, WIML…SNTA, MATG…TGTA, WIFF…MTLV, ILLS…GVFF, GAYT…VLPS, ETFP…AAGV, LPLW…TNIC, FAFI…SGMV, and MAFV…LYMN.

This sequence belongs to the SLC13A/DASS transporter (TC 2.A.47) family. NADC subfamily. As to expression, nad-1 and nad-2 are coexpressed in the intestinal tract from early larvae to adults, expression is from the pharynx through to the anus. Expression level is significantly greater in the anterior half of the intestine than in the posterior half.

It localises to the membrane. In terms of biological role, high-affinity sodium-dicarboxylate cotransporter that accepts a range of tricarboxylic acid-cycle intermediates with 4-5 carbon atoms. There is no interaction with monocarboxylates. Plays a role in the regulation of life span. This is Sodium-dependent high-affinity dicarboxylate transporter 3 (nac-3) from Caenorhabditis elegans.